The primary structure comprises 458 residues: UDP-N-acetylglucosamine 1-carboxyvinyltransferase (458 aa).

34–35 (KN) contacts phosphoenolpyruvate. Arginine 104 provides a ligand contact to UDP-N-acetyl-alpha-D-glucosamine. The active-site Proton donor is the cysteine 128. Residue cysteine 128 is modified to 2-(S-cysteinyl)pyruvic acid O-phosphothioketal. UDP-N-acetyl-alpha-D-glucosamine contacts are provided by aspartate 319 and isoleucine 341.

Belongs to the EPSP synthase family. MurA subfamily.

Its subcellular location is the cytoplasm. It carries out the reaction phosphoenolpyruvate + UDP-N-acetyl-alpha-D-glucosamine = UDP-N-acetyl-3-O-(1-carboxyvinyl)-alpha-D-glucosamine + phosphate. The protein operates within cell wall biogenesis; peptidoglycan biosynthesis. Its function is as follows. Cell wall formation. Adds enolpyruvyl to UDP-N-acetylglucosamine. This chain is UDP-N-acetylglucosamine 1-carboxyvinyltransferase, found in Prochlorococcus marinus (strain MIT 9515).